The following is a 567-amino-acid chain: Urease subunit alpha (567 aa).

Residues 129 to 567 (GGIDAHIHFI…LPMAQRYFLF (439 aa)) enclose the Urease domain. Ni(2+)-binding residues include His-134, His-136, and Lys-217. Lys-217 is subject to N6-carboxylysine. His-219 is a binding site for substrate. Ni(2+) contacts are provided by His-246 and His-272. His-320 (proton donor) is an active-site residue. Asp-360 is a Ni(2+) binding site.

This sequence belongs to the metallo-dependent hydrolases superfamily. Urease alpha subunit family. In terms of assembly, heterotrimer of UreA (gamma), UreB (beta) and UreC (alpha) subunits. Three heterotrimers associate to form the active enzyme. It depends on Ni cation as a cofactor. Carboxylation allows a single lysine to coordinate two nickel ions.

The protein resides in the cytoplasm. The enzyme catalyses urea + 2 H2O + H(+) = hydrogencarbonate + 2 NH4(+). The protein operates within nitrogen metabolism; urea degradation; CO(2) and NH(3) from urea (urease route): step 1/1. This chain is Urease subunit alpha, found in Teredinibacter turnerae (strain ATCC 39867 / T7901).